We begin with the raw amino-acid sequence, 310 residues long: Zinc-finger homeodomain protein 3 (310 aa).

The interval 1 to 64 is disordered; that stretch reads MEIASQEDPI…GLGKNHDHSH (64 aa). A compositionally biased stretch (polar residues) spans 39–56; the sequence is LNITTSNPLLVSSNSNGL. A ZF-HD dimerization-type; degenerate zinc finger spans residues 87 to 136; sequence YKECLKNHAATMGGNAIDGCGEFMPSGEEGSIEALTCSVCNCHRNFHRRE. Disordered regions lie at residues 184–220 and 281–310; these read TAGSNSESEDLMEEEGGGSLTFRQPPPPPSPYSYGHN and LSKKSNNVSNNVDLSAGNNDITENLASTNP. The segment covering 190 to 199 has biased composition (acidic residues); that stretch reads ESEDLMEEEG. Positions 222–285 form a DNA-binding region, homeobox; sequence KKRFRTKFTQ…NNKQNLSKKS (64 aa). A compositionally biased stretch (low complexity) spans 281 to 291; it reads LSKKSNNVSNN. Positions 292–310 are enriched in polar residues; the sequence is VDLSAGNNDITENLASTNP.

As to quaternary structure, homo- and heterodimer with other ZFHD proteins. Interacts with MIF2 and MIF3; these interactions prevent nuclear localization and DNA-binding to inhibit transcription regulation activity. Binds to ZHD1, ZHD2 and ZHD11. Interacts with HIPP30. Interacts with KIN10, KIN11 and FLZ8. As to expression, mostly expressed in flowers and inflorescence.

It is found in the nucleus. Its function is as follows. Putative transcription factor. This is Zinc-finger homeodomain protein 3 (ZHD3) from Arabidopsis thaliana (Mouse-ear cress).